The chain runs to 126 residues: uncharacterized protein (126 aa).

Positions 19 to 126 (IFERIIEGAV…LGGGLLGSIA (108 aa)) constitute an HIT domain. A Histidine triad motif motif is present at residues 111 to 115 (HLHIH).

This is an uncharacterized protein from Chlamydia muridarum (strain MoPn / Nigg).